The following is a 174-amino-acid chain: MSKRRKNQGYLAIIAAVSIGAAAYLWWRNHSEDDSVSKFNQQDDGTAQDNQIKEKPAIKLGKKRLHRSLCVIISNKLSNLVELDWDEILQEDIVFLILPSVNDFQNSNDIKTDTHKIINCDTELGLWACVRTLKKNELLVCADDIKVPDDIGRYCDKISQIKSSQQLMNYLDET.

The helical transmembrane segment at 9–27 threads the bilayer; the sequence is GYLAIIAAVSIGAAAYLWW.

The protein belongs to the peroxin-22 family.

The protein resides in the peroxisome membrane. Its function is as follows. Involved in peroxisome biogenesis. The polypeptide is Peroxisome assembly protein 22 (PEX22) (Candida glabrata (strain ATCC 2001 / BCRC 20586 / JCM 3761 / NBRC 0622 / NRRL Y-65 / CBS 138) (Yeast)).